The following is a 435-amino-acid chain: ATP-dependent protease ATPase subunit HslU (435 aa).

Residues V18, 60 to 65 (GVGKTE), D248, E313, and R385 contribute to the ATP site.

The protein belongs to the ClpX chaperone family. HslU subfamily. A double ring-shaped homohexamer of HslV is capped on each side by a ring-shaped HslU homohexamer. The assembly of the HslU/HslV complex is dependent on binding of ATP.

The protein localises to the cytoplasm. Its function is as follows. ATPase subunit of a proteasome-like degradation complex; this subunit has chaperone activity. The binding of ATP and its subsequent hydrolysis by HslU are essential for unfolding of protein substrates subsequently hydrolyzed by HslV. HslU recognizes the N-terminal part of its protein substrates and unfolds these before they are guided to HslV for hydrolysis. This Parvibaculum lavamentivorans (strain DS-1 / DSM 13023 / NCIMB 13966) protein is ATP-dependent protease ATPase subunit HslU.